Reading from the N-terminus, the 209-residue chain is Octanoyltransferase (209 aa).

In terms of domain architecture, BPL/LPL catalytic spans 30–209 (DNEPEIVYLV…IQTEFNKIFK (180 aa)). Substrate contacts are provided by residues 69-76 (RGGKFTFH), 143-145 (AIG), and 156-158 (GIA). Cysteine 174 functions as the Acyl-thioester intermediate in the catalytic mechanism.

It belongs to the LipB family.

The protein resides in the cytoplasm. It carries out the reaction octanoyl-[ACP] + L-lysyl-[protein] = N(6)-octanoyl-L-lysyl-[protein] + holo-[ACP] + H(+). It participates in protein modification; protein lipoylation via endogenous pathway; protein N(6)-(lipoyl)lysine from octanoyl-[acyl-carrier-protein]: step 1/2. Functionally, catalyzes the transfer of endogenously produced octanoic acid from octanoyl-acyl-carrier-protein onto the lipoyl domains of lipoate-dependent enzymes. Lipoyl-ACP can also act as a substrate although octanoyl-ACP is likely to be the physiological substrate. This Rickettsia prowazekii (strain Madrid E) protein is Octanoyltransferase.